Consider the following 398-residue polypeptide: Protochlorophyllide reductase, chloroplastic (398 aa).

Belongs to the short-chain dehydrogenases/reductases (SDR) family. POR subfamily.

It is found in the plastid. The protein resides in the chloroplast. The enzyme catalyses chlorophyllide a + NADP(+) = protochlorophyllide a + NADPH + H(+). It functions in the pathway porphyrin-containing compound metabolism; chlorophyll biosynthesis. Functionally, phototransformation of protochlorophyllide (Pchlide) to chlorophyllide (Chlide). The chain is Protochlorophyllide reductase, chloroplastic (POR1) from Daucus carota (Wild carrot).